A 351-amino-acid chain; its full sequence is c-di-GMP synthase (351 aa).

The protein belongs to the CD-NTase family. E05 subfamily.

It catalyses the reaction 2 GTP = 3',3'-c-di-GMP + 2 diphosphate. In terms of biological role, cyclic nucleotide synthase (second messenger synthase) of a CBASS antivirus system. CBASS (cyclic oligonucleotide-based antiphage signaling system) provides immunity against bacteriophage. The CD-NTase protein synthesizes cyclic nucleotides in response to infection; these serve as specific second messenger signals. The signals activate a diverse range of effectors, leading to bacterial cell death and thus abortive phage infection. A type I-D(GG) CBASS system. Functionally, cyclic dinucleotide synthase that catalyzes the synthesis of c-di-GMP, has no activity with other NTP substrates. The protein is c-di-GMP synthase (cdnE) of Capnocytophaga granulosa (strain ATCC 51502 / DSM 11449 / JCM 8566 / LMG 16022 / NCTC 12948 / B0611).